The chain runs to 200 residues: Isochorismatase family protein 2A (200 aa).

It belongs to the isochorismatase family.

This chain is Isochorismatase family protein 2A, found in Dictyostelium discoideum (Social amoeba).